A 387-amino-acid chain; its full sequence is MRKKILILGSTGSIGTQALEVIASRQDQFEVVGIAAGGRDPQLIIQQAQMLGLAADHVAVANEKSATQVSRALGAAVLSGRDAATDLVESVPADTVLNGLVGSMGLRATLATIQLGEVLALANKESLVAGGTFVTSQAAPGQIVPVDSEHSAMAQCLRSGASAEVSKLVLTASGGPFRGWSREEMWDVTPEQAAAHPTWSMGQMNTLNSATLINKGLELIEATLLFDIPADRIEVTVHPQSIVHSMVTFCDGATIAQASPPSMLLSISHALAWPHRVPEAQPALDFSQASTWDFMPVDNEAFPAVELAREVALKQGTYPAVYNAANEQAAAAFLRGRIKFPQIVDIVGEVVAGSSQFAGVASSVEEIIAHESESRRRADALVDKLSR.

NADPH contacts are provided by threonine 11, glycine 12, serine 13, isoleucine 14, glycine 37, arginine 39, and asparagine 123. Lysine 124 serves as a coordination point for 1-deoxy-D-xylulose 5-phosphate. Glutamate 125 lines the NADPH pocket. Aspartate 147 serves as a coordination point for Mn(2+). 1-deoxy-D-xylulose 5-phosphate-binding residues include serine 148, glutamate 149, serine 173, and histidine 196. Glutamate 149 contacts Mn(2+). Glycine 202 lines the NADPH pocket. Residues serine 209, asparagine 214, lysine 215, and glutamate 218 each coordinate 1-deoxy-D-xylulose 5-phosphate. Glutamate 218 provides a ligand contact to Mn(2+).

It belongs to the DXR family. Requires Mg(2+) as cofactor. Mn(2+) is required as a cofactor.

It carries out the reaction 2-C-methyl-D-erythritol 4-phosphate + NADP(+) = 1-deoxy-D-xylulose 5-phosphate + NADPH + H(+). The protein operates within isoprenoid biosynthesis; isopentenyl diphosphate biosynthesis via DXP pathway; isopentenyl diphosphate from 1-deoxy-D-xylulose 5-phosphate: step 1/6. Catalyzes the NADPH-dependent rearrangement and reduction of 1-deoxy-D-xylulose-5-phosphate (DXP) to 2-C-methyl-D-erythritol 4-phosphate (MEP). The chain is 1-deoxy-D-xylulose 5-phosphate reductoisomerase from Corynebacterium diphtheriae (strain ATCC 700971 / NCTC 13129 / Biotype gravis).